A 217-amino-acid chain; its full sequence is Small ribosomal subunit protein uS3 (217 aa).

Residues 38 to 106 (IRKFVQKELA…QVHINIIEIK (69 aa)) form the KH type-2 domain.

This sequence belongs to the universal ribosomal protein uS3 family. Part of the 30S ribosomal subunit. Forms a tight complex with proteins S10 and S14.

Binds the lower part of the 30S subunit head. Binds mRNA in the 70S ribosome, positioning it for translation. The protein is Small ribosomal subunit protein uS3 of Streptococcus sanguinis (strain SK36).